The primary structure comprises 50 residues: Cytochrome c oxidase subunit 4 (50 aa).

The Cytoplasmic segment spans residues 2–17 (ASHHEITDHKHGEMDI). A helical transmembrane segment spans residues 18 to 49 (RHQQATFAGFIKGATWVSILSIAVLVFLALAN). Residue serine 50 is a topological domain, periplasmic.

The protein resides in the cell inner membrane. The catalysed reaction is 4 Fe(II)-[cytochrome c] + O2 + 8 H(+)(in) = 4 Fe(III)-[cytochrome c] + 2 H2O + 4 H(+)(out). In terms of biological role, not required for enzymatic activity or proton pumping of the cytochrome c oxidase complex. This is Cytochrome c oxidase subunit 4 (ctaH) from Paracoccus denitrificans.